Reading from the N-terminus, the 365-residue chain is Probable 7-methylxanthine methyltransferase 3 (365 aa).

Tyr-18 is a binding site for S-adenosyl-L-homocysteine. Thr-25 contributes to the theobromine binding site. Positions 62, 67, 99, 100, 132, and 133 each coordinate S-adenosyl-L-homocysteine. Theobromine contacts are provided by Tyr-150, His-153, and Trp-154. Asn-170, Phe-258, and Asn-259 together coordinate Mg(2+). Phe-311 serves as a coordination point for theobromine.

Belongs to the methyltransferase superfamily. Type-7 methyltransferase family. Mg(2+) serves as cofactor.

It carries out the reaction 7-methylxanthine + S-adenosyl-L-methionine = theobromine + S-adenosyl-L-homocysteine + H(+). It participates in alkaloid biosynthesis. In terms of biological role, involved in the biosynthesis of theobromine. In Theobroma cacao (Cacao), this protein is Probable 7-methylxanthine methyltransferase 3.